We begin with the raw amino-acid sequence, 336 residues long: DNA-directed RNA polymerase subunit alpha (336 aa).

The tract at residues 1 to 232 (MIQKNWQELI…DQLSVFVNFD (232 aa)) is alpha N-terminal domain (alpha-NTD). The segment at 248–336 (FNPALLKKVD…DLAKRYEDQY (89 aa)) is alpha C-terminal domain (alpha-CTD).

This sequence belongs to the RNA polymerase alpha chain family. Homodimer. The RNAP catalytic core consists of 2 alpha, 1 beta, 1 beta' and 1 omega subunit. When a sigma factor is associated with the core the holoenzyme is formed, which can initiate transcription.

It catalyses the reaction RNA(n) + a ribonucleoside 5'-triphosphate = RNA(n+1) + diphosphate. Its function is as follows. DNA-dependent RNA polymerase catalyzes the transcription of DNA into RNA using the four ribonucleoside triphosphates as substrates. The polypeptide is DNA-directed RNA polymerase subunit alpha (Sinorhizobium fredii (strain NBRC 101917 / NGR234)).